A 433-amino-acid polypeptide reads, in one-letter code: Enolase (433 aa).

Q167 serves as a coordination point for (2R)-2-phosphoglycerate. E209 functions as the Proton donor in the catalytic mechanism. Residues D246, E291, and D318 each coordinate Mg(2+). (2R)-2-phosphoglycerate contacts are provided by K343, R372, S373, and K394. K343 serves as the catalytic Proton acceptor.

Belongs to the enolase family. Component of the RNA degradosome, a multiprotein complex involved in RNA processing and mRNA degradation. Mg(2+) is required as a cofactor.

The protein resides in the cytoplasm. It localises to the secreted. It is found in the cell surface. It carries out the reaction (2R)-2-phosphoglycerate = phosphoenolpyruvate + H2O. It participates in carbohydrate degradation; glycolysis; pyruvate from D-glyceraldehyde 3-phosphate: step 4/5. Catalyzes the reversible conversion of 2-phosphoglycerate (2-PG) into phosphoenolpyruvate (PEP). It is essential for the degradation of carbohydrates via glycolysis. In Tolumonas auensis (strain DSM 9187 / NBRC 110442 / TA 4), this protein is Enolase.